A 491-amino-acid chain; its full sequence is Glutamyl-tRNA(Gln) amidotransferase subunit A (491 aa).

S158 acts as the Charge relay system in catalysis. S182 functions as the Acyl-ester intermediate in the catalytic mechanism.

The protein belongs to the amidase family. GatA subfamily. Heterotrimer of A, B and C subunits.

The enzyme catalyses L-glutamyl-tRNA(Gln) + L-glutamine + ATP + H2O = L-glutaminyl-tRNA(Gln) + L-glutamate + ADP + phosphate + H(+). In terms of biological role, allows the formation of correctly charged Gln-tRNA(Gln) through the transamidation of misacylated Glu-tRNA(Gln) in organisms which lack glutaminyl-tRNA synthetase. The reaction takes place in the presence of glutamine and ATP through an activated gamma-phospho-Glu-tRNA(Gln). The sequence is that of Glutamyl-tRNA(Gln) amidotransferase subunit A from Bradyrhizobium diazoefficiens (strain JCM 10833 / BCRC 13528 / IAM 13628 / NBRC 14792 / USDA 110).